We begin with the raw amino-acid sequence, 284 residues long: MNHDSILLGLIGEDISLSRTPAMHEAEGLAQGAATVYRRIDTLTDRARGRSLQELLDAARSTGFNGLNITHPYKQAVLPLLDEVSEQAAQLGAVNTVVIGEDGRTSGHNTDVTGFARGLEEGLPDATMTTVVQVGAGGVGNAVAYSLVTHGVEQLQVADLDPARAQALADAINSAIGREAVHGIDARGVEEAIAAADGVVNATPMGMLAHPGTAFDTSCLTPHHWVGDVVYMPIETQLLKDARALGCRTLDGTRMAIHQAVDAFRLFTGLEPDVERMRATFLSL.

Positions 18 and 70 each coordinate shikimate. Residues 18 to 20 (SRT) and Thr-70 each bind L-quinate. Tyr-73 (proton acceptor) is an active-site residue. Shikimate contacts are provided by Lys-74, Asn-95, and Asp-111. L-quinate is bound by residues Lys-74, Asn-95, and Asp-111. NAD(+) contacts are provided by residues 137–138 (GG), Asp-159, Arg-164, 203–206 (TPMG), Ala-214, Val-229, and Gly-252. Gln-259 is a binding site for shikimate. Gln-259 contributes to the L-quinate binding site.

This sequence belongs to the shikimate dehydrogenase family. As to quaternary structure, homodimer.

The enzyme catalyses L-quinate + NAD(+) = 3-dehydroquinate + NADH + H(+). It catalyses the reaction shikimate + NAD(+) = 3-dehydroshikimate + NADH + H(+). The protein operates within metabolic intermediate biosynthesis; chorismate biosynthesis; chorismate from D-erythrose 4-phosphate and phosphoenolpyruvate: step 4/7. Its pathway is aromatic compound metabolism; 3,4-dihydroxybenzoate biosynthesis; 3-dehydroquinate from D-quinate (NAD(+) route). In terms of biological role, involved in the biosynthesis of the chorismate, which leads to the biosynthesis of aromatic amino acids, and plays a key role in the quinate degradation pathway. Catalyzes the NAD(+)-dependent oxidation of both quinate and shikimate to 3-dehydroquinate and 3-dehydroshikimate, respectively. It can only use NAD. This chain is Quinate/shikimate dehydrogenase (NAD(+)), found in Corynebacterium efficiens (strain DSM 44549 / YS-314 / AJ 12310 / JCM 11189 / NBRC 100395).